A 246-amino-acid polypeptide reads, in one-letter code: uncharacterized protein (246 aa).

6 consecutive transmembrane segments (helical) span residues 7–27 (KVTL…ALII), 50–70 (LNIL…SMEF), 99–119 (VSFY…LLFF), 135–155 (LALI…GLLC), 163–183 (AVAV…VQLM), and 219–239 (FSIG…WWCF).

The protein resides in the cell membrane. This is an uncharacterized protein from Bacillus subtilis (strain 168).